Consider the following 300-residue polypeptide: 17-beta-hydroxysteroid dehydrogenase 13 (300 aa).

An N-terminal signal peptide occupies residues 1–19 (MNLILELLLLVGIIIYSYL). A Phosphoserine modification is found at Ser33. 40 to 67 (LITGAGHGIGRLTAYEFAKQKSRLVLWD) is a binding site for NAD(+). Ser69 carries the phosphoserine modification. N6-acetyllysine is present on Lys79. Ser172 contributes to the substrate binding site. The active-site Proton acceptor is Tyr185. Position 189 (Lys189) interacts with NAD(+).

This sequence belongs to the short-chain dehydrogenases/reductases (SDR) family.

It is found in the lipid droplet. The protein resides in the endoplasmic reticulum. It catalyses the reaction 17beta-estradiol + NAD(+) = estrone + NADH + H(+). The catalysed reaction is all-trans-retinol + NAD(+) = all-trans-retinal + NADH + H(+). It carries out the reaction all-trans-retinal + NAD(+) + H2O = all-trans-retinoate + NADH + 2 H(+). Its function is as follows. Plays a pivotal role in hepatic lipid metabolism. In vitro, it catalyzes the oxidation of a variety of lipid substrates, including 17beta-estradiol, retinol, retinal, and leukotriene B4. The sequence is that of 17-beta-hydroxysteroid dehydrogenase 13 (Hsd17b13) from Rattus norvegicus (Rat).